A 327-amino-acid chain; its full sequence is Probable cell division protein WhiA (327 aa).

The H-T-H motif DNA-binding region spans 275-308; sequence SLEELGQLADPPMTKDAVAGRIRRLLSMADRRAR.

The protein belongs to the WhiA family.

In terms of biological role, involved in cell division and chromosome segregation. In Nocardia farcinica (strain IFM 10152), this protein is Probable cell division protein WhiA.